Here is a 542-residue protein sequence, read N- to C-terminus: MARYVFITGGVVSSLGKGIAAAALAALLQARGYRVRIRKLDPYLNVDPGTMSPYQHGEVFVTDDGSETDLDLGHYERFTGRSANRHDNITTGRIYRNIIERERRGDYLGATVQVIPHVTDEIKNFITTGNEESDFVLCEIGGTVGDIEAMPFLEAIRQLHNELPRQSVVYMHLTLMPYISSAGELKTKPTQHSVKELQSVGIAPDILLVRADRPIPESERCKLSLFCNVRPSAVIQALDVSTIYDVPIAYHKEGLDSEILSAFGIDSAPEPKMDRWEDIAYRIHHPEGEVTIAIVGKYTGLKDAYKSLIEAVAHGGLANKVKVNIEWIEAEIFEKEDPALFLQKVHGILVPGAFGVRGSEGKIRAIQFARNHKIPFLGICFGMQLACIEAVRNLAGIENASSSEFCETKDSVVGLMTEWLKGDVFEKRTASGNLGGTMRLGAFIAQLKKDSHISKIYGTTSICERHRHRYEVNIHYKDILERFGFVFSGMSPDGVLPEAIEYNNHPWFIGVQYHPELKSRPFDPHPLFSSFIAATVEQSRLF.

The segment at 1-265 (MARYVFITGG…DSEILSAFGI (265 aa)) is amidoligase domain. S13 serves as a coordination point for CTP. S13 lines the UTP pocket. 14 to 19 (SLGKGI) contacts ATP. Y54 contributes to the L-glutamine binding site. Residue D71 coordinates ATP. Mg(2+) contacts are provided by D71 and E139. CTP contacts are provided by residues 146–148 (DIE), 186–191 (KTKPTQ), and K222. Residues 186 to 191 (KTKPTQ) and K222 contribute to the UTP site. The 251-residue stretch at 291–541 (TIAIVGKYTG…IAATVEQSRL (251 aa)) folds into the Glutamine amidotransferase type-1 domain. A353 serves as a coordination point for L-glutamine. C380 (nucleophile; for glutamine hydrolysis) is an active-site residue. L-glutamine is bound by residues 381–384 (FGMQ), E404, and R469. Active-site residues include H514 and E516.

It belongs to the CTP synthase family. Homotetramer.

It carries out the reaction UTP + L-glutamine + ATP + H2O = CTP + L-glutamate + ADP + phosphate + 2 H(+). It catalyses the reaction L-glutamine + H2O = L-glutamate + NH4(+). The enzyme catalyses UTP + NH4(+) + ATP = CTP + ADP + phosphate + 2 H(+). Its pathway is pyrimidine metabolism; CTP biosynthesis via de novo pathway; CTP from UDP: step 2/2. With respect to regulation, allosterically activated by GTP, when glutamine is the substrate; GTP has no effect on the reaction when ammonia is the substrate. The allosteric effector GTP functions by stabilizing the protein conformation that binds the tetrahedral intermediate(s) formed during glutamine hydrolysis. Inhibited by the product CTP, via allosteric rather than competitive inhibition. Catalyzes the ATP-dependent amination of UTP to CTP with either L-glutamine or ammonia as the source of nitrogen. Regulates intracellular CTP levels through interactions with the four ribonucleotide triphosphates. This Bartonella bacilliformis (strain ATCC 35685 / KC583 / Herrer 020/F12,63) protein is CTP synthase.